The following is a 421-amino-acid chain: Testin (421 aa).

A PET domain is found at 92 to 199 (MILTNPVPAK…GDVKLPSEMD (108 aa)). Positions 135-165 (QPVAGSEGAQYRKKQLAKQLPEHDQDPSKCH) are disordered. The segment covering 154-165 (LPEHDQDPSKCH) has biased composition (basic and acidic residues). LIM zinc-binding domains lie at 234-297 (YSCY…CDSE), 299-359 (PRCA…NHAV), and 362-421 (QGCH…KMMS).

The protein belongs to the prickle / espinas / testin family. Interacts via LIM domain 1 with ZYX. Interacts (via LIM domain 3) with ENAH and VASP. Interacts with ALKBH4, talin, actin, alpha-actinin, GRIP1 and PXN. Interacts (via LIM domain 2) with ACTL7A (via N-terminus). Heterodimer with ACTL7A; the heterodimer interacts with ENAH to form a heterotrimer.

The protein resides in the cytoplasm. Its subcellular location is the cell junction. It localises to the focal adhesion. Its function is as follows. Scaffold protein that may play a role in cell adhesion, cell spreading and in the reorganization of the actin cytoskeleton. Plays a role in the regulation of cell proliferation. May act as a tumor suppressor. The sequence is that of Testin (TES) from Dasypus novemcinctus (Nine-banded armadillo).